The sequence spans 445 residues: MSRKYFGTDGIRGRVGEFPITPDFVLKLGWAVGMAFRRQGNCRVLIGKDTRSSGYMFESAFEAGLSASGADTLLLGPMPTPGIAYLTRTFHAEAGVVISASHNPHDDNGIKFFSGQGTKLPDDVELMIEELLDAPMTVVESARLGKVSRINDAAGRYIEFCKSSVPTSTDFNGLKVVLDCANGATYKIAPSVFRELGAEVTVLAASPNGLNINDKCGSTHLDGLQAAVVEHHADLGIAFDGDGDRVMMVDHTGAVVDGDELLFLIARDLQESGRLQGGVVGTLMSNLGLELALQELHIPFVRAKVGDRYVMAELLARNWMLGGENSGHIVCCQNTTTGDAIIAALQVLMALKHRGQTLAEARQGIRKCPQVLINVRFKGESDPLEHPSVKEASVRVTEQMGGRGRVLLRKSGTEPLVRVMVEGDEEASVRAHAEQLAKIVSEVCA.

The active-site Phosphoserine intermediate is the S101. 4 residues coordinate Mg(2+): S101, D240, D242, and D244. A Phosphoserine modification is found at S101.

It belongs to the phosphohexose mutase family. Mg(2+) is required as a cofactor. Activated by phosphorylation.

It carries out the reaction alpha-D-glucosamine 1-phosphate = D-glucosamine 6-phosphate. Catalyzes the conversion of glucosamine-6-phosphate to glucosamine-1-phosphate. This is Phosphoglucosamine mutase from Pseudomonas aeruginosa (strain LESB58).